Reading from the N-terminus, the 53-residue chain is UPF0391 membrane protein Bcep18194_C7021 (53 aa).

2 consecutive transmembrane segments (helical) span residues Ala5–Ala25 and Ile30–Val50.

The protein belongs to the UPF0391 family.

The protein localises to the cell membrane. The chain is UPF0391 membrane protein Bcep18194_C7021 from Burkholderia lata (strain ATCC 17760 / DSM 23089 / LMG 22485 / NCIMB 9086 / R18194 / 383).